A 344-amino-acid chain; its full sequence is Thioredoxin reductase FGSG_00043 (344 aa).

FAD-binding positions include 12–15 (GGPA), 34–39 (DSVSYR), H51, and A121. C165 and C168 form a disulfide bridge. FAD contacts are provided by residues D314 and 321–322 (FV).

The protein belongs to the class-II pyridine nucleotide-disulfide oxidoreductase family. As to quaternary structure, homodimer. The cofactor is FAD.

The protein operates within mycotoxin biosynthesis. Thioredoxin reductase; part of the gene cluster that mediates the biosynthesis of gramillins A and B, bicyclic lipopeptides that induce cell death in maize leaves but not in wheat leaves. The nonribosomal peptide synthetase GRA1 incorporates respectively a glutamic adic (Glu), a leucine (Leu), a serine (Ser), a hydroxyglutamine (HOGln), a 2-amino decanoic acid, and 2 cysteins (CysB and CysA). The biosynthesis of 2-amino decanoic acid incorporated in gramillins could be initiated by a fatty acid synthase composed of the alpha and beta subunits FGSG_00036 and FGSG_11656. The cytochrome P450 monooxygenase FGSG_15680 could hydroxylate the fatty acid chain. Subsequent oxidation to the ketone by the oxidoreductase FGSG_00048 and transamination by aminotransferase FGSG_00049 could form 2-amino-decanoic acid. On the other hand, FGSG_15680 could also be responsible for the HO-modified glutamine at the gamma-position. Whether hydroxylation occurs on the fully assembled product or on the Gln residue prior to assembly into the gramillins requires further proof. The thioredoxin FGSG_00043 could also be required for the disulfide-bond formation between CysA and CysB. The specific involvement of the remaining proteins from the cluster is more difficult to discern, but could have broader regulatory (FGSG_00040 and FGSG_11657) or enzymatic functions (FGSG_00044 and FGSG_00045). The final C-domain of GRA1 does not possess the expected sequence of a termination CT domain, often implicated in macrocyclization and release of a cyclopeptidein fungal NRPs; and the thioesterase FGSG_00047 may act in concert with the terminal C-domain of GRA1 to catalyze the formation of the macrocyclic anhydride and release of the products. This chain is Thioredoxin reductase FGSG_00043, found in Gibberella zeae (strain ATCC MYA-4620 / CBS 123657 / FGSC 9075 / NRRL 31084 / PH-1) (Wheat head blight fungus).